The primary structure comprises 194 residues: Adenylate kinase isoenzyme 1 (194 aa).

Methionine 1 bears the N-acetylmethionine mark. Position 18 to 23 (18 to 23 (GSGKGT)) interacts with ATP. Serine 38 bears the Phosphoserine mark. The NMP stretch occupies residues 38-67 (STGDLLRSEVSSGSARGKKLSEIMEKGQLV). Residues threonine 39, arginine 44, 65–67 (QLV), 94–97 (GYPR), and glutamine 101 contribute to the AMP site. Residues 131-141 (KRGETSGRVDD) are LID. Arginine 132 lines the ATP pocket. Positions 138 and 149 each coordinate AMP. Glycine 177 is a binding site for ATP.

Belongs to the adenylate kinase family. AK1 subfamily. As to quaternary structure, monomer. Requires Mg(2+) as cofactor.

Its subcellular location is the cytoplasm. The catalysed reaction is a ribonucleoside 5'-phosphate + ATP = a ribonucleoside 5'-diphosphate + ADP. The enzyme catalyses AMP + ATP = 2 ADP. It catalyses the reaction dAMP + ATP = dADP + ADP. It carries out the reaction dATP + AMP = dADP + ADP. The catalysed reaction is dAMP + dATP = 2 dADP. The enzyme catalyses a 2'-deoxyribonucleoside 5'-diphosphate + ATP = a 2'-deoxyribonucleoside 5'-triphosphate + ADP. It catalyses the reaction a ribonucleoside 5'-diphosphate + ATP = a ribonucleoside 5'-triphosphate + ADP. It carries out the reaction CDP + GTP = CTP + GDP. The catalysed reaction is GDP + ATP = GTP + ADP. The enzyme catalyses UDP + ATP = UTP + ADP. It catalyses the reaction GTP + UDP = UTP + GDP. It carries out the reaction dTDP + GTP = dTTP + GDP. The catalysed reaction is dCDP + GTP = dCTP + GDP. The enzyme catalyses dGDP + ATP = dGTP + ADP. It catalyses the reaction dADP + GTP = dATP + GDP. It carries out the reaction thiamine diphosphate + ADP = thiamine triphosphate + AMP. In terms of biological role, catalyzes the reversible transfer of the terminal phosphate group between ATP and AMP. Also displays broad nucleoside diphosphate kinase activity. Plays an important role in cellular energy homeostasis and in adenine nucleotide metabolism. Also catalyzes at a very low rate the synthesis of thiamine triphosphate (ThTP) from thiamine diphosphate (ThDP) and ADP. This is Adenylate kinase isoenzyme 1 from Homo sapiens (Human).